The sequence spans 300 residues: Estradiol 17-beta-dehydrogenase 11 (300 aa).

An N-terminal signal peptide occupies residues 1–18 (MKILLDLLLLLPLLIVCC). 40–67 (LITGAGHGIGRLTAYEFAKLKSKLVLWD) provides a ligand contact to NADP(+). Serine 172 contacts substrate. Tyrosine 185 (proton acceptor) is an active-site residue. Residue lysine 189 participates in NADP(+) binding.

This sequence belongs to the short-chain dehydrogenases/reductases (SDR) family. 17-beta-HSD 3 subfamily.

The protein localises to the endoplasmic reticulum. It localises to the lipid droplet. The enzyme catalyses 17beta-estradiol + NAD(+) = estrone + NADH + H(+). It catalyses the reaction 17beta-estradiol + NADP(+) = estrone + NADPH + H(+). Functionally, can convert androstan-3-alpha,17-beta-diol (3-alpha-diol) to androsterone in vitro, suggesting that it may participate in androgen metabolism during steroidogenesis. May act by metabolizing compounds that stimulate steroid synthesis and/or by generating metabolites that inhibit it. Has no activity toward DHEA (dehydroepiandrosterone), or A-dione (4-androste-3,17-dione), and only a slight activity toward testosterone to A-dione. The sequence is that of Estradiol 17-beta-dehydrogenase 11 (HSD17B11) from Macaca fascicularis (Crab-eating macaque).